A 669-amino-acid polypeptide reads, in one-letter code: DNA mismatch repair protein MutL (669 aa).

Residues 356 to 382 (FEQRQNTENNQEKTFSSEESNSKPFME) are disordered. The span at 361 to 378 (NTENNQEKTFSSEESNSK) shows a compositional bias: polar residues.

It belongs to the DNA mismatch repair MutL/HexB family.

This protein is involved in the repair of mismatches in DNA. It is required for dam-dependent methyl-directed DNA mismatch repair. May act as a 'molecular matchmaker', a protein that promotes the formation of a stable complex between two or more DNA-binding proteins in an ATP-dependent manner without itself being part of a final effector complex. The chain is DNA mismatch repair protein MutL from Staphylococcus aureus (strain USA300).